A 145-amino-acid polypeptide reads, in one-letter code: Superoxide dismutase [Mn/Fe] (145 aa).

Fe(3+) contacts are provided by His-10 and His-64. Mn(2+)-binding residues include His-10 and His-64.

It belongs to the iron/manganese superoxide dismutase family. The cofactor is Mn(2+). It depends on Fe(3+) as a cofactor.

It catalyses the reaction 2 superoxide + 2 H(+) = H2O2 + O2. Destroys superoxide anion radicals which are normally produced within the cells and which are toxic to biological systems. Catalyzes the dismutation of superoxide anion radicals into O2 and H2O2 by successive reduction and oxidation of the transition metal ion at the active site. This is Superoxide dismutase [Mn/Fe] (sodA) from Streptococcus iniae (Streptococcus shiloi).